The chain runs to 238 residues: tRNA (guanine-N(7)-)-methyltransferase (238 aa).

Positions 71, 96, 123, and 146 each coordinate S-adenosyl-L-methionine. Residue Asp-146 is part of the active site. Substrate-binding positions include Lys-150, Asp-182, and 217 to 220; that span reads TKFE.

It belongs to the class I-like SAM-binding methyltransferase superfamily. TrmB family.

It carries out the reaction guanosine(46) in tRNA + S-adenosyl-L-methionine = N(7)-methylguanosine(46) in tRNA + S-adenosyl-L-homocysteine. It functions in the pathway tRNA modification; N(7)-methylguanine-tRNA biosynthesis. Functionally, catalyzes the formation of N(7)-methylguanine at position 46 (m7G46) in tRNA. The sequence is that of tRNA (guanine-N(7)-)-methyltransferase from Methylobacillus flagellatus (strain ATCC 51484 / DSM 6875 / VKM B-1610 / KT).